A 255-amino-acid chain; its full sequence is 5'-nucleotidase SurE (255 aa).

A divalent metal cation is bound by residues D8, D9, S40, and N92.

Belongs to the SurE nucleotidase family. It depends on a divalent metal cation as a cofactor.

The protein resides in the cytoplasm. It carries out the reaction a ribonucleoside 5'-phosphate + H2O = a ribonucleoside + phosphate. Its function is as follows. Nucleotidase that shows phosphatase activity on nucleoside 5'-monophosphates. This Brucella canis (strain ATCC 23365 / NCTC 10854 / RM-666) protein is 5'-nucleotidase SurE.